The following is a 608-amino-acid chain: Rap1 GTPase-GDP dissociation stimulator 1 (608 aa).

ARM repeat units lie at residues 89–131 and 171–212; these read GLIS…DQAG and DSLQ…NLAE. A prevents binding to prenylated RHOA region spans residues 122–171; sequence EGRSAVDQAGGAQIVVDHLRSLCSKTDPASEKLLTVFCGMLMNYSNEKND. Residue Lys-231 is modified to N6-acetyllysine. ARM repeat units lie at residues 348 to 391, 392 to 432, and 480 to 520; these read DGNC…NLAI, PVVN…MLID, and SKDV…LIAA.

Interacts with RABL3. Interacts with RHOT1. As to quaternary structure, interacts with unprenylated RHOA; the interaction is direct. Interacts with RAP1A. Interacts with KRAS. Interacts with RAC1. Interacts with RAP1B. Preferentially interacts with unprenylated GTPases that will become geranylgeranylated. May also interact with prenylated GTPases. In terms of assembly, interacts with prenylated RHOA; the interaction is direct and in a 1:1 stoichiometry. Interacts with RAP1A. Interacts with KRAS. Interacts with RAC1. Interacts with RAP1B. Preferentially interacts with prenylated GTPases. The N-terminus is blocked. In terms of processing, forms covalent cross-links mediated by transglutaminase TGM2, between a glutamine and the epsilon-amino group of a lysine residue, forming homopolymers and heteropolymers. Brain.

The protein resides in the cytoplasm. Its subcellular location is the cytosol. The protein localises to the endoplasmic reticulum. It is found in the mitochondrion. It localises to the nucleus. Functionally, acts as a GEF (guanine nucleotide exchange factor) for the Rho family of small GTP-binding proteins (G proteins) that stimulates the dissociation of GDP to enable subsequent binding of GTP. Additionally, appears to chaperone the processing and/or trafficking of small GTPases containing a C-terminal polybasic region independently of GEF activity. Targets include RAP1A/RAP1B, RHOA, RHOB, RHOC, RAC1 and KRAS. Regulates mitochondrial dynamics by controlling RHOT function to promote mitochondrial fission during high calcium conditions. Able to promote the Ca(2+) release from the endoplasmic reticulum via both inositol trisphosphate (Ins3P) and ryanodine sensitive receptors leading to a enhanced mitochondrial Ca(2+) uptake. Acts as a GEF (guanine nucleotide exchange factor) for unprenylated RHOA. Chaperones the entry and passage of small GTPases through the prenylation pathway. Recognizes the last amino acid in the GTPase C-terminal CAAX motif with a preference for 'Leu' over 'Met', indicating involvement in the geranylgeranylation pathway. May also recognize prenylated GTPases. In terms of biological role, acts as a GEF (guanine nucleotide exchange factor) for prenylated RHOA. Acts as a GEF for RHOC. Chaperones the downstream trafficking and/or processing of small newly prenylated GTPases. Escorts RAC1 to the nucleus. The protein is Rap1 GTPase-GDP dissociation stimulator 1 (RAP1GDS1) of Bos taurus (Bovine).